Reading from the N-terminus, the 258-residue chain is Global transcriptional regulator CodY (258 aa).

Residues 1–156 form a GAF domain region; it reads MSSLLEKTRQ…SATIIGLEIL (156 aa). The segment at residues 204–223 is a DNA-binding region (H-T-H motif); sequence ASKIADKVGITRSVIVNALR.

Belongs to the CodY family.

The protein localises to the cytoplasm. DNA-binding global transcriptional regulator which is involved in the adaptive response to starvation and acts by directly or indirectly controlling the expression of numerous genes in response to nutrient availability. During rapid exponential growth, CodY is highly active and represses genes whose products allow adaptation to nutrient depletion. This chain is Global transcriptional regulator CodY, found in Clostridium tetani (strain Massachusetts / E88).